The primary structure comprises 987 residues: ATP-dependent 6-phosphofructokinase subunit alpha (987 aa).

The interval 1-602 (MPSSSDAINR…DYRYFRDISI (602 aa)) is N-terminal catalytic PFK domain 1. ATP-binding positions include glycine 237, 300-301 (RC), and 330-333 (GDGS). A Mg(2+)-binding site is contributed by aspartate 331. Residues 376-378 (SID), arginine 413, 420-422 (MGR), glutamate 477, arginine 504, and 510-513 (HVQR) contribute to the beta-D-fructose 6-phosphate site. Aspartate 378 acts as the Proton acceptor in catalysis. Positions 603-616 (YDDGSKQLSEDKRL) are interdomain linker. Residues 617–987 (NIAIVHVGAA…KSLLKKQERY (371 aa)) form a C-terminal regulatory PFK domain 2 region. Residues arginine 686, 743–747 (TVSNN), arginine 781, 788–790 (QGG), glutamate 848, arginine 874, 880–883 (HVQQ), and arginine 958 each bind beta-D-fructose 2,6-bisphosphate.

This sequence belongs to the phosphofructokinase type A (PFKA) family. ATP-dependent PFK group I subfamily. Eukaryotic two domain clade 'E' sub-subfamily. Heterooctamer of 4 alpha and 4 beta chains. The cofactor is Mg(2+).

The protein resides in the cytoplasm. It carries out the reaction beta-D-fructose 6-phosphate + ATP = beta-D-fructose 1,6-bisphosphate + ADP + H(+). The protein operates within carbohydrate degradation; glycolysis; D-glyceraldehyde 3-phosphate and glycerone phosphate from D-glucose: step 3/4. Allosterically activated by ADP, AMP, or fructose 2,6-bisphosphate, and allosterically inhibited by ATP or citrate. Catalyzes the phosphorylation of D-fructose 6-phosphate to fructose 1,6-bisphosphate by ATP, the first committing step of glycolysis. This chain is ATP-dependent 6-phosphofructokinase subunit alpha (PFK1), found in Candida albicans (Yeast).